A 532-amino-acid chain; its full sequence is Probable C4-dicarboxylate sensor kinase (532 aa).

The Cytoplasmic portion of the chain corresponds to 1–12 (MRLFRQLSIQWK). The chain crosses the membrane as a helical span at residues 13–33 (ITILSFGIVAFALMMVSISLL). Residues 34–175 (GYVTSIKEDE…YADMIQEFWQ (142 aa)) are Extracellular-facing. Residues 176-196 (PALLIGLITALFGFWGSWLLA) traverse the membrane as a helical segment. Over 197–532 (SHIKRQTFNM…FSIYLPKKRG (336 aa)) the chain is Cytoplasmic. The region spanning 216–279 (VERDASFNAI…PEILSIGKPL (64 aa)) is the PAS domain. Residues 315–531 (SDVDRLAEEL…TFSIYLPKKR (217 aa)) form the Histidine kinase domain. Residue His339 is modified to Phosphohistidine; by autocatalysis.

Its subcellular location is the cell membrane. The enzyme catalyses ATP + protein L-histidine = ADP + protein N-phospho-L-histidine.. Its function is as follows. Member of the two-component regulatory system DctS/DctR. Probably activates DctR by phosphorylation. Essential for expression of dctP. The sequence is that of Probable C4-dicarboxylate sensor kinase (dctS) from Halalkalibacterium halodurans (strain ATCC BAA-125 / DSM 18197 / FERM 7344 / JCM 9153 / C-125) (Bacillus halodurans).